Here is a 149-residue protein sequence, read N- to C-terminus: Deoxyuridine 5'-triphosphate nucleotidohydrolase (149 aa).

Substrate-binding positions include 70-72, asparagine 83, and 87-89; these read RSG and LID.

The protein belongs to the dUTPase family. Mg(2+) serves as cofactor.

It catalyses the reaction dUTP + H2O = dUMP + diphosphate + H(+). It participates in pyrimidine metabolism; dUMP biosynthesis; dUMP from dCTP (dUTP route): step 2/2. Its function is as follows. This enzyme is involved in nucleotide metabolism: it produces dUMP, the immediate precursor of thymidine nucleotides and it decreases the intracellular concentration of dUTP so that uracil cannot be incorporated into DNA. This is Deoxyuridine 5'-triphosphate nucleotidohydrolase from Blochmanniella pennsylvanica (strain BPEN).